The chain runs to 426 residues: Glutamate-1-semialdehyde 2,1-aminomutase (426 aa).

Lys265 carries the post-translational modification N6-(pyridoxal phosphate)lysine.

The protein belongs to the class-III pyridoxal-phosphate-dependent aminotransferase family. HemL subfamily. As to quaternary structure, homodimer. The cofactor is pyridoxal 5'-phosphate.

The protein localises to the cytoplasm. It catalyses the reaction (S)-4-amino-5-oxopentanoate = 5-aminolevulinate. It participates in porphyrin-containing compound metabolism; protoporphyrin-IX biosynthesis; 5-aminolevulinate from L-glutamyl-tRNA(Glu): step 2/2. This is Glutamate-1-semialdehyde 2,1-aminomutase from Salmonella newport (strain SL254).